Consider the following 356-residue polypeptide: Arginine kinase 1 (356 aa).

The Phosphagen kinase N-terminal domain maps to 6-91 (VLAKLEEGYA…FDPIIEDYHG (86 aa)). Substrate is bound at residue 64–68 (GVGIY). Residues 119–356 (YVISTRVRCG…TELIKLEKSL (238 aa)) enclose the Phosphagen kinase C-terminal domain. ATP contacts are provided by residues 122-126 (STRVR) and His185. Residue Glu225 coordinates substrate. Arg229 contacts ATP. Residue Cys271 participates in substrate binding. ATP is bound by residues 280–284 (RASVH) and 309–314 (RGTRGE). Glu314 contributes to the substrate binding site.

This sequence belongs to the ATP:guanido phosphotransferase family.

It carries out the reaction L-arginine + ATP = N(omega)-phospho-L-arginine + ADP + H(+). The chain is Arginine kinase 1 from Drosophila melanogaster (Fruit fly).